The following is a 245-amino-acid chain: Type III pantothenate kinase (245 aa).

Residue 6–13 (DVGNTAMK) coordinates ATP. Residues Y93 and 100–103 (GVDR) contribute to the substrate site. D102 acts as the Proton acceptor in catalysis. D121 is a K(+) binding site. Residue S124 coordinates ATP. T175 serves as a coordination point for substrate.

Belongs to the type III pantothenate kinase family. Homodimer. Requires NH4(+) as cofactor. K(+) is required as a cofactor.

The protein localises to the cytoplasm. It carries out the reaction (R)-pantothenate + ATP = (R)-4'-phosphopantothenate + ADP + H(+). It functions in the pathway cofactor biosynthesis; coenzyme A biosynthesis; CoA from (R)-pantothenate: step 1/5. Catalyzes the phosphorylation of pantothenate (Pan), the first step in CoA biosynthesis. The sequence is that of Type III pantothenate kinase from Alcanivorax borkumensis (strain ATCC 700651 / DSM 11573 / NCIMB 13689 / SK2).